The sequence spans 220 residues: MFDIGFSELLLVLVIGLVVLGPERLPVAVRTVSGWIRTLRSLAATVQNELAQELKLQELQDSLKKVEQAGLQNLTPELKASMDELKEAAEALKRSYHVDAGSEAPHTIHNPLVTEPEAIHDGVTPAEPATQVSALAQAPNILEAGTASVVDSVVEAAPVTTVKSVVQGEVLVKSTPVQEVGLADVMDKPVTKQQIDTIDSHGTDLSSAGPSRIHQPGGDQ.

Residues 1 to 21 form a helical membrane-spanning segment; it reads MFDIGFSELLLVLVIGLVVLG. The tract at residues 192–220 is disordered; that stretch reads KQQIDTIDSHGTDLSSAGPSRIHQPGGDQ.

The protein belongs to the TatB family. In terms of assembly, the Tat system comprises two distinct complexes: a TatABC complex, containing multiple copies of TatA, TatB and TatC subunits, and a separate TatA complex, containing only TatA subunits. Substrates initially bind to the TatABC complex, which probably triggers association of the separate TatA complex to form the active translocon.

Its subcellular location is the cell inner membrane. Part of the twin-arginine translocation (Tat) system that transports large folded proteins containing a characteristic twin-arginine motif in their signal peptide across membranes. Together with TatC, TatB is part of a receptor directly interacting with Tat signal peptides. TatB may form an oligomeric binding site that transiently accommodates folded Tat precursor proteins before their translocation. The protein is Sec-independent protein translocase protein TatB of Yersinia pestis bv. Antiqua (strain Antiqua).